Here is a 145-residue protein sequence, read N- to C-terminus: MASHRLFLLCLAGLVFMSEAGPTGQSKCPLMVKVLDAVRGSPAVNVAVKVFKKAADETWEPFASGKTSESGELHGLTTDEKFVEGVYKVELDTKSYWKTLGISPFHEYVEVVFTANDSGQRRYTIAALLSPYSYSTTALVSDPKE.

Positions 1 to 20 (MASHRLFLLCLAGLVFMSEA) are cleaved as a signal peptide. The residue at position 28 (Cys-28) is a Sulfocysteine. Lys-33 is an L-thyroxine binding site. Glu-60 carries the 4-carboxyglutamate modification. Position 70 is a phosphoserine (Ser-70). An L-thyroxine-binding site is contributed by Glu-72. Asn-116 carries an N-linked (GlcNAc...) asparagine glycan. L-thyroxine is bound at residue Ser-135.

This sequence belongs to the transthyretin family. In terms of assembly, homotetramer. Dimer of dimers. In the homotetramer, subunits assemble around a central channel that can accommodate two ligand molecules. Interacts with RBP4. Sulfonation of the reactive cysteine Cys-28 enhances the stability of the native conformation of TTR, avoiding misassembly of the protein leading to amyloid formation.

It is found in the secreted. In terms of biological role, thyroid hormone-binding protein. Probably transports thyroxine from the bloodstream to the brain. This is Transthyretin (TTR) from Erinaceus europaeus (Western European hedgehog).